An 815-amino-acid chain; its full sequence is Neuronal PAS domain-containing protein 2 (815 aa).

Positions 1-10 are enriched in basic and acidic residues; the sequence is MDEDEKDRAK. Positions 1 to 21 are disordered; that stretch reads MDEDEKDRAKRASRNKSEKKR. The sufficient for heterodimer formation with BMAL1, E-box binding and for the effect of NADPH stretch occupies residues 1 to 61; it reads MDEDEKDRAK…VIGFLQKHNE (61 aa). The bHLH domain maps to 9–59; the sequence is AKRASRNKSEKKRRDQFNVLIKELSSMLPGNTRKMDKTTVLEKVIGFLQKH. Positions 82–152 constitute a PAS 1 domain; sequence NEEFTQLMLE…KMLSSCMLMT (71 aa). Residues histidine 119 and histidine 171 each coordinate heme b. A PAS 2 domain is found at 237–307; that stretch reads FLKEMCIVEE…RCHEHLMQFG (71 aa). The region spanning 311–354 is the PAC domain; sequence SCCYRFLTKGQQWIWLQTHYYITYHQWNSKPEFIVCTHMVVSYA. Residues 405 to 420 show a composition bias toward low complexity; the sequence is RTPSVSSRSSPKSSHT. Disordered stretches follow at residues 405–467, 584–656, and 728–815; these read RTPS…SLPS, PGQI…AAGC, and FATT…QPLR. Composition is skewed to polar residues over residues 425–462, 588–608, and 616–630; these read PAST…TALQ, ASPQ…SSQG, and ELTT…STAT. Composition is skewed to low complexity over residues 633 to 655 and 732 to 752; these read GPST…SAAG and PPSQ…HQQQ. Over residues 753 to 786 the composition is skewed to polar residues; it reads RYLQVQTPSSLHNEQTDSLLLSSYSPQQGNMGYH. The span at 787–815 shows a compositional bias: low complexity; that stretch reads QTQQQQQQQQLPRRSNSLSESSNLPQPLR.

In terms of assembly, component of the circadian clock oscillator which includes the CRY proteins, CLOCK or NPAS2, BMAL1 or BMAL2, CSNK1D and/or CSNK1E, TIMELESS and the PER proteins. Efficient DNA binding requires dimerization with another bHLH protein. Forms a heterodimer with BMAL1 and this heterodimerization is required for E-box-dependent transactivation. Heme is required as a cofactor. As to expression, expressed in the retinal photoreceptor cells (at protein level). Expressed in the pineal gland and retina.

Its subcellular location is the nucleus. Its activity is regulated as follows. Carbon monoxide (CO) and the redox state of the cell can modulate the transcriptional activity of the NPAS2-BMAL1 heterodimer. NADH and NADPH enhance the DNA-binding activity of the heterodimer whereas CO binds the heme group in NPAS2 and inhibits the DNA-binding activity of the heterodimer. Its function is as follows. Transcriptional activator which forms a core component of the circadian clock. The circadian clock, an internal time-keeping system, regulates various physiological processes through the generation of approximately 24 hour circadian rhythms in gene expression, which are translated into rhythms in metabolism and behavior. It is derived from the Latin roots 'circa' (about) and 'diem' (day) and acts as an important regulator of a wide array of physiological functions including metabolism, sleep, body temperature, blood pressure, endocrine, immune, cardiovascular, and renal function. Consists of two major components: the central clock, residing in the suprachiasmatic nucleus (SCN) of the brain, and the peripheral clocks that are present in nearly every tissue and organ system. Both the central and peripheral clocks can be reset by environmental cues, also known as Zeitgebers (German for 'timegivers'). The predominant Zeitgeber for the central clock is light, which is sensed by retina and signals directly to the SCN. The central clock entrains the peripheral clocks through neuronal and hormonal signals, body temperature and feeding-related cues, aligning all clocks with the external light/dark cycle. Circadian rhythms allow an organism to achieve temporal homeostasis with its environment at the molecular level by regulating gene expression to create a peak of protein expression once every 24 hours to control when a particular physiological process is most active with respect to the solar day. Transcription and translation of core clock components (CLOCK, NPAS2, BMAL1, BMAL2, PER1, PER2, PER3, CRY1 and CRY2) plays a critical role in rhythm generation, whereas delays imposed by post-translational modifications (PTMs) are important for determining the period (tau) of the rhythms (tau refers to the period of a rhythm and is the length, in time, of one complete cycle). A diurnal rhythm is synchronized with the day/night cycle, while the ultradian and infradian rhythms have a period shorter and longer than 24 hours, respectively. Disruptions in the circadian rhythms contribute to the pathology of cardiovascular diseases, cancer, metabolic syndromes and aging. A transcription/translation feedback loop (TTFL) forms the core of the molecular circadian clock mechanism. Transcription factors, CLOCK or NPAS2 and BMAL1 or BMAL2, form the positive limb of the feedback loop, act in the form of a heterodimer and activate the transcription of core clock genes and clock-controlled genes (involved in key metabolic processes), harboring E-box elements (5'-CACGTG-3') within their promoters. The core clock genes: PER1/2/3 and CRY1/2 which are transcriptional repressors form the negative limb of the feedback loop and interact with the CLOCK|NPAS2-BMAL1|BMAL2 heterodimer inhibiting its activity and thereby negatively regulating their own expression. This heterodimer also activates nuclear receptors NR1D1/2 and RORA/B/G, which form a second feedback loop and which activate and repress BMAL1 transcription, respectively. NPAS2 positively regulates the circadian expression of AANAT in the retinal photoreceptor cells. This is Neuronal PAS domain-containing protein 2 (NPAS2) from Gallus gallus (Chicken).